A 132-amino-acid chain; its full sequence is MSQDLVWSIIKKNNAFLKSSHGLTLSAEPGNLRNKNSLKYSGLARRTTIDVAAVNGKVVVSSKIVKKAAFPAQSKKTTTFSTVNTRKTARFVKTLATQYAPELRAAALGRLHRVQSALRSAKKAAARKAKKN.

It belongs to the eukaryotic ribosomal protein eL28 family.

This is Large ribosomal subunit protein eL28 (rpl28) from Dictyostelium discoideum (Social amoeba).